Reading from the N-terminus, the 260-residue chain is Late transcription factor 1 (260 aa).

Belongs to the chordopoxvirinae VLTF-1 family. Interacts with the late transcription factors VLTF-2 and VLTF-3. Interacts with the late transcription elongation factor H5/VLTF-4. Interacts with itself.

Functionally, associates with RNA polymerase to initiate transcription from late gene promoters. In Vertebrata (FPV), this protein is Late transcription factor 1 (VLTF1).